The chain runs to 93 residues: Large ribosomal subunit protein uL23cz/uL23cy (93 aa).

This sequence belongs to the universal ribosomal protein uL23 family. In terms of assembly, part of the 50S ribosomal subunit.

The protein resides in the plastid. It is found in the chloroplast. In terms of biological role, binds to 23S rRNA. The chain is Large ribosomal subunit protein uL23cz/uL23cy (rpl23-A) from Citrus sinensis (Sweet orange).